A 236-amino-acid polypeptide reads, in one-letter code: Phosphoribosylaminoimidazole-succinocarboxamide synthase (236 aa).

Belongs to the SAICAR synthetase family.

It carries out the reaction 5-amino-1-(5-phospho-D-ribosyl)imidazole-4-carboxylate + L-aspartate + ATP = (2S)-2-[5-amino-1-(5-phospho-beta-D-ribosyl)imidazole-4-carboxamido]succinate + ADP + phosphate + 2 H(+). The protein operates within purine metabolism; IMP biosynthesis via de novo pathway; 5-amino-1-(5-phospho-D-ribosyl)imidazole-4-carboxamide from 5-amino-1-(5-phospho-D-ribosyl)imidazole-4-carboxylate: step 1/2. This Wolinella succinogenes (strain ATCC 29543 / DSM 1740 / CCUG 13145 / JCM 31913 / LMG 7466 / NCTC 11488 / FDC 602W) (Vibrio succinogenes) protein is Phosphoribosylaminoimidazole-succinocarboxamide synthase.